Here is a 1309-residue protein sequence, read N- to C-terminus: Lysine-specific demethylase 2B (1309 aa).

Serine 26 carries the post-translational modification Phosphoserine. Positions 147-315 (FSHTKLEHLV…MQLRIYEIED (169 aa)) constitute a JmjC domain. Substrate is bound at residue threonine 208. The Fe cation site is built by histidine 211 and aspartate 213. Lysine 228 is a binding site for substrate. Residue histidine 283 coordinates Fe cation. Positions 378–403 (DMEEESCEQQPQEEEEEEEDKEEEGD) are enriched in acidic residues. The tract at residues 378 to 476 (DMEEESCEQQ…PTGSPATEVS (99 aa)) is disordered. Over residues 404–413 (GADKTPKPPT) the composition is skewed to basic and acidic residues. Residues 415-424 (DPTSPTSTPP) are compositionally biased toward low complexity. Serine 447 and serine 450 each carry phosphoserine. Threonine 466 carries the phosphothreonine modification. Positions 467 to 476 (PTGSPATEVS) are enriched in polar residues. Phosphoserine is present on serine 470. Residues 579–625 (ARRRRTRCRKCEACLRTECGECHFCKDMKKFGGPGRMKQSCIMRQCI) form a CXXC-type zinc finger. The Zn(2+) site is built by cysteine 586, cysteine 589, cysteine 592, cysteine 597, cysteine 600, cysteine 603, cysteine 619, cysteine 624, cysteine 635, cysteine 638, cysteine 661, cysteine 664, histidine 669, cysteine 672, cysteine 692, and cysteine 695. Residues 632–698 (TAVCLVCGEA…CWECPKCNHA (67 aa)) form a PHD-type zinc finger. Disordered stretches follow at residues 700–816 (KTGK…SLSP) and 828–1005 (QLKP…SASP). A compositionally biased stretch (basic and acidic residues) spans 722-772 (KEQKMNRDNKEGQEPAKRRSECEEAPRRRSDEHPKKVPADGILRRKSDDVH). The span at 792–816 (SSLQTSPGSSSHLSPRPPLGSSLSP) shows a compositional bias: low complexity. Residues lysine 830 and lysine 863 each participate in a glycyl lysine isopeptide (Lys-Gly) (interchain with G-Cter in SUMO2) cross-link. Polar residues predominate over residues 883–892 (SRSSSPTAGP). Residues 905-914 (KVKMRRKRRL) show a composition bias toward basic residues. The span at 915 to 933 (VNKELSKELSKELNHEIQK) shows a compositional bias: basic and acidic residues. Residues 916–944 (NKELSKELSKELNHEIQKTESTLAHESQQ) adopt a coiled-coil conformation. Residue serine 924 is modified to Phosphoserine. Polar residues predominate over residues 934–946 (TESTLAHESQQPI). Residues serine 948 and serine 952 each carry the phosphoserine modification. A compositionally biased stretch (basic and acidic residues) spans 955-968 (DEPKRPLSHCERPH). 2 positions are modified to phosphoserine: serine 991 and serine 1004. The F-box domain occupies 1032-1078 (DGAAHVMHREVWMAVFSYLSHRDLCVCMRVCRTWNRWCCDKRLWTRI). 6 LRR repeats span residues 1106-1127 (WTNI…LRDL), 1129-1155 (LSGC…DVQW), 1195-1220 (GLDI…QLSY), 1221-1250 (CNHI…NLSD), 1251-1275 (CNKV…DLRY), and 1276-1309 (CKQV…QKLS).

This sequence belongs to the JHDM1 histone demethylase family. As to quaternary structure, interacts with SKP1, forming heterodimers. The KDM2B-SKP1 heterodimeric complex interacts with the PCGF1-BCORL heterodimeric complex to form a homotetrameric polycomb repression complex 1 (PRC1.1). Directly interacts with CUL1. The SKP1-KDM2B interacts with UBB. The cofactor is Fe(2+).

Its subcellular location is the nucleus. It is found in the nucleolus. The protein localises to the chromosome. It catalyses the reaction N(6),N(6)-dimethyl-L-lysyl(36)-[histone H3] + 2 2-oxoglutarate + 2 O2 = L-lysyl(36)-[histone H3] + 2 formaldehyde + 2 succinate + 2 CO2. Its activity is regulated as follows. Histone demethylase activity is inhibited by fumarate. Functionally, histone demethylase that demethylates 'Lys-4' and 'Lys-36' of histone H3, thereby playing a central role in histone code. Preferentially demethylates trimethylated H3 'Lys-4' and dimethylated H3 'Lys-36' residue while it has weak or no activity for mono- and tri-methylated H3 'Lys-36'. Preferentially binds the transcribed region of ribosomal RNA and represses the transcription of ribosomal RNA genes which inhibits cell growth and proliferation. May also serve as a substrate-recognition component of the SCF (SKP1-CUL1-F-box protein)-type E3 ubiquitin ligase complex. In Mus musculus (Mouse), this protein is Lysine-specific demethylase 2B (Kdm2b).